Reading from the N-terminus, the 243-residue chain is LexA repressor (243 aa).

The segment at 1-30 (MSDDTGEFTDGSTESPADADGAGRRRAVDN) is disordered. Residues 21-30 (GAGRRRAVDN) show a composition bias toward basic and acidic residues. Residues 56–76 (IREIGDAVGLTSTSSVAHQLR) constitute a DNA-binding region (H-T-H motif). Residues serine 167 and lysine 204 each act as for autocatalytic cleavage activity in the active site.

This sequence belongs to the peptidase S24 family. Homodimer.

It carries out the reaction Hydrolysis of Ala-|-Gly bond in repressor LexA.. Represses a number of genes involved in the response to DNA damage (SOS response), including recA and lexA. In the presence of single-stranded DNA, RecA interacts with LexA causing an autocatalytic cleavage which disrupts the DNA-binding part of LexA, leading to derepression of the SOS regulon and eventually DNA repair. In Mycolicibacterium smegmatis (strain ATCC 700084 / mc(2)155) (Mycobacterium smegmatis), this protein is LexA repressor.